The sequence spans 125 residues: Acidic phospholipase A2 5 (125 aa).

A signal peptide is located at residue Ser-1. The propeptide occupies 2 to 7 (NRPMPL). 8 disulfide bridges follow: Cys-18-Cys-77, Cys-33-Cys-124, Cys-35-Cys-50, Cys-37-Cys-54, Cys-49-Cys-105, Cys-56-Cys-98, Cys-66-Cys-91, and Cys-84-Cys-96. Phe-28 lines the N-acetyl-beta-D-glucosamine pocket. Asp-30 is a Zn(2+) binding site. Positions 34 and 36 each coordinate Ca(2+). N-acetyl-beta-D-glucosamine contacts are provided by His-53 and Lys-69. His-53 is a catalytic residue. Residue Glu-76 participates in Zn(2+) binding. The active site involves Asp-99. Asn-117 provides a ligand contact to Zn(2+).

As to quaternary structure, heterodimer formed between isoform 5 and isoform 6 in presence of zinc ion and monomer in absence of zinc ion. The cofactor is Ca(2+). In terms of tissue distribution, expressed by the venom gland.

It localises to the secreted. It carries out the reaction a 1,2-diacyl-sn-glycero-3-phosphocholine + H2O = a 1-acyl-sn-glycero-3-phosphocholine + a fatty acid + H(+). In terms of biological role, PLA2 catalyzes the calcium-dependent hydrolysis of the 2-acyl groups in 3-sn-phosphoglycerides. This is Acidic phospholipase A2 5 from Naja sagittifera (Andaman cobra).